A 503-amino-acid polypeptide reads, in one-letter code: ESX-5 secretion system protein EccD5 (503 aa).

11 consecutive transmembrane segments (helical) span residues 137–157 (IVAV…ATGV), 169–189 (LTTI…MLLL), 200–220 (VADI…AAAP), 224–244 (VGSP…ALAL), 250–270 (RLGI…AALA), 272–292 (MVAA…CVVA), 359–379 (FLSG…TSLC), 382–402 (HTGQ…FLLL), 413–433 (SITL…RYAL), 439–459 (LAVS…MAAA), and 480–500 (YLCL…YAAI).

This sequence belongs to the EccD/Snm4 family. In terms of assembly, part of the ESX-5 / type VII secretion system (T7SS), which is composed of cytosolic and membrane components. The ESX-5 membrane complex is composed of EccB5, EccC5, EccD5 and EccE5.

It is found in the cell inner membrane. Part of the ESX-5 specialized secretion system, which is responsible for the secretion of EsxN and a number of PE_PGRS and PPE proteins, including PPE41. The chain is ESX-5 secretion system protein EccD5 from Mycobacterium tuberculosis (strain CDC 1551 / Oshkosh).